Consider the following 100-residue polypeptide: Large ribosomal subunit protein uL23 (100 aa).

This sequence belongs to the universal ribosomal protein uL23 family. In terms of assembly, part of the 50S ribosomal subunit. Contacts protein L29, and trigger factor when it is bound to the ribosome.

Its function is as follows. One of the early assembly proteins it binds 23S rRNA. One of the proteins that surrounds the polypeptide exit tunnel on the outside of the ribosome. Forms the main docking site for trigger factor binding to the ribosome. The chain is Large ribosomal subunit protein uL23 from Photobacterium profundum (strain SS9).